A 943-amino-acid chain; its full sequence is Coiled-coil and C2 domain-containing protein 1A (943 aa).

Threonine 91 is modified (phosphothreonine). Disordered stretches follow at residues asparagine 186–leucine 250 and aspartate 300–proline 337. Low complexity-rich tracts occupy residues alanine 195 to histidine 206 and alanine 229 to alanine 238. A Phosphoserine modification is found at serine 248. Residues leucine 304–alanine 319 show a composition bias toward pro residues. Residues arginine 339–histidine 385 are a coiled coil. The disordered stretch occupies residues asparagine 430 to alanine 483. Serine 435 is modified (phosphoserine). A compositionally biased stretch (polar residues) spans lysine 445–leucine 456. The span at alanine 469–glycine 478 shows a compositional bias: low complexity. The stretch at lysine 477 to valine 510 forms a coiled coil. One can recognise a C2 domain in the interval arginine 630–leucine 764.

This sequence belongs to the CC2D1 family. In terms of tissue distribution, highly expressed in brain, expression is enriched in the gray matter and strongest in the olfactory bulb.

It localises to the cytoplasm. It is found in the nucleus. The protein resides in the cytoskeleton. The protein localises to the microtubule organizing center. Its subcellular location is the centrosome. In terms of biological role, transcription factor that binds specifically to the DRE (dual repressor element) and represses HTR1A gene transcription in neuronal cells. The combination of calcium and ATP specifically inactivates the binding with FRE. May play a role in the altered regulation of HTR1A associated with anxiety and major depression. Mediates HDAC-independent repression of HTR1A promoter in neuronal cell. Performs essential function in controlling functional maturation of synapses. This chain is Coiled-coil and C2 domain-containing protein 1A (Cc2d1a), found in Mus musculus (Mouse).